Reading from the N-terminus, the 500-residue chain is Na(+)/H(+) antiporter NhaB (500 aa).

13 consecutive transmembrane segments (helical) span residues 11-31, 34-54, 58-78, 96-116, 129-149, 150-170, 205-225, 241-261, 311-331, 350-370, 394-414, 450-470, and 477-497; these read HGFL…FLVL, LLLV…EFIF, MALK…ALLL, VILL…LLLF, AILS…LDAL, TVTA…HRVA, LLMH…VGEP, FFFK…LTCV, ILII…LMVI, FQDA…VAVI, MLYL…VATI, ATPN…APLI, and MVWM…WAVT.

Belongs to the NhaB Na(+)/H(+) (TC 2.A.34) antiporter family.

The protein resides in the cell inner membrane. It carries out the reaction 2 Na(+)(in) + 3 H(+)(out) = 2 Na(+)(out) + 3 H(+)(in). Na(+)/H(+) antiporter that extrudes sodium in exchange for external protons. This is Na(+)/H(+) antiporter NhaB from Pseudomonas putida (strain GB-1).